The sequence spans 471 residues: Ribulose bisphosphate carboxylase large chain (471 aa).

Substrate contacts are provided by N115 and T165. The active-site Proton acceptor is K167. K169 serves as a coordination point for substrate. Positions 193, 195, and 196 each coordinate Mg(2+). The residue at position 193 (K193) is an N6-carboxylysine. H286 serves as the catalytic Proton acceptor. R287, H319, and S371 together coordinate substrate.

This sequence belongs to the RuBisCO large chain family. Type I subfamily. In terms of assembly, heterohexadecamer of 8 large chains and 8 small chains. Forms a CsoS2-CsoS1-RuBisCO complex. Requires Mg(2+) as cofactor.

Its subcellular location is the carboxysome. It catalyses the reaction 2 (2R)-3-phosphoglycerate + 2 H(+) = D-ribulose 1,5-bisphosphate + CO2 + H2O. It carries out the reaction D-ribulose 1,5-bisphosphate + O2 = 2-phosphoglycolate + (2R)-3-phosphoglycerate + 2 H(+). Its function is as follows. RuBisCO catalyzes two reactions: the carboxylation of D-ribulose 1,5-bisphosphate, the primary event in carbon dioxide fixation, as well as the oxidative fragmentation of the pentose substrate in the photorespiration process. Both reactions occur simultaneously and in competition at the same active site. The protein is Ribulose bisphosphate carboxylase large chain of Parasynechococcus marenigrum (strain WH8102).